Consider the following 201-residue polypeptide: Natural cytotoxicity triggering receptor 3 (201 aa).

A signal peptide spans 1–18; the sequence is MAWMLLLILIMVYPGSCA. An Ig-like domain is found at 19–126; sequence LWVSQPPEIR…VGTGNGTRLV (108 aa). Over 19–133 the chain is Extracellular; it reads LWVSQPPEIR…RLVVEKEYPQ (115 aa). Cys-39 and Cys-108 are oxidised to a cystine. Residues Asn-42 and Asn-121 are each glycosylated (N-linked (GlcNAc...) asparagine). The helical transmembrane segment at 134 to 154 threads the bilayer; sequence LGAGTVLLLRAGFYAVSFLSV. At 155 to 201 the chain is on the cytoplasmic side; the sequence is AMGSTLYYQGKCLTWKGPRRQLPAVVPGPLPPPCGSSAHLLPPVPGG.

This sequence belongs to the natural cytotoxicity receptor (NCR) family. Homodimer in the unliganted form. Interacts with CD3Z. Interacts with and is activated by binding to NCR3LG1. Interacts with and is activated by binding to BAG6. Interacts with and is inhibited by binding to LGALS3.

It localises to the cell membrane. Functionally, cell membrane receptor of natural killer/NK cells that is activated by binding of extracellular ligands including BAG6 and NCR3LG1. Stimulates NK cells cytotoxicity toward neighboring cells producing these ligands. It controls, for instance, NK cells cytotoxicity against tumor cells. Engagement of NCR3 by BAG6 also promotes myeloid dendritic cells (DC) maturation, both through killing DCs that did not acquire a mature phenotype, and inducing the release by NK cells of TNFA and IFNG that promote DC maturation. The sequence is that of Natural cytotoxicity triggering receptor 3 (NCR3) from Macaca mulatta (Rhesus macaque).